The following is a 218-amino-acid chain: Sodium channel regulatory subunit beta-1 (218 aa).

The signal sequence occupies residues 1–18 (MGTLLALVVGAVLVSSAW). Over 19–157 (GGCVEVDSET…DKANRDMASI (139 aa)) the chain is Extracellular. Intrachain disulfides connect Cys21–Cys43 and Cys40–Cys121. The Ig-like C2-type domain maps to 22-150 (VEVDSETEAV…KIHLEVVDKA (129 aa)). Asn93, Asn110, Asn114, and Asn135 each carry an N-linked (GlcNAc...) asparagine glycan. The chain crosses the membrane as a helical span at residues 158–179 (VSEIMMYVLIVVLTIWLVAEMV). At 180–218 (YCYKKIAAATEAAAQENASEYLAITSESKENCTGVQVAE) the chain is on the cytoplasmic side.

This sequence belongs to the sodium channel auxiliary subunit SCN1B (TC 8.A.17) family. As to quaternary structure, a voltage-gated sodium (Nav) channel consists of an ion-conducting pore-forming alpha subunit functional on its own that is regulated by one or more beta subunits. Interacts with SCN1A; regulatory subunit of SCN1A/Nav1.1. Interacts with SCN3A; regulatory subunit of SCN3A/Nav1.3. Interacts with SCN4A; regulatory subunit of SCN4A/Nav1.4. Interacts with SCN5A; regulatory subunit of SCN5A/Nav1.5. Interacts with SCN8A; regulatory subunit of SCN8A/Nav1.6. Interacts with SCN9A; regulatory subunit of SCN9A/Nav1.7. Interacts with SCN10A; regulatory subunit of SCN10A/Nav1.8. Interacts with NFASC. Interacts with TMEM65. Detected in brain (at protein level). Expressed in brain, heart, skeletal muscle and spinal cord.

The protein localises to the cell membrane. Its subcellular location is the perikaryon. It localises to the cell projection. The protein resides in the axon. Regulatory subunit of multiple voltage-gated sodium (Nav) channels directly mediating the depolarization of excitable membranes. Navs, also called VGSCs (voltage-gated sodium channels) or VDSCs (voltage-dependent sodium channels), operate by switching between closed and open conformations depending on the voltage difference across the membrane. In the open conformation they allow Na(+) ions to selectively pass through the pore, along their electrochemical gradient. The influx of Na+ ions provokes membrane depolarization, initiating the propagation of electrical signals throughout cells and tissues. The accessory beta subunits participate in localization and functional modulation of the Nav channels. Modulates the activity of SCN1A/Nav1.1, SCN2A/Nav1.2, SCN3A/Nav1.3, SCN4A/Nav1.4, SCN5A/Nav1.5, SCN8A/Nav1.6, SCN9A/Nav1.7 and SCN10A/Nav1.8. The chain is Sodium channel regulatory subunit beta-1 from Rattus norvegicus (Rat).